A 299-amino-acid chain; its full sequence is Ribosomal RNA small subunit methyltransferase H (299 aa).

S-adenosyl-L-methionine contacts are provided by residues Ala-32–His-34, Asp-52, Phe-79, Asp-100, and Gln-107.

Belongs to the methyltransferase superfamily. RsmH family.

The protein localises to the cytoplasm. The catalysed reaction is cytidine(1402) in 16S rRNA + S-adenosyl-L-methionine = N(4)-methylcytidine(1402) in 16S rRNA + S-adenosyl-L-homocysteine + H(+). Specifically methylates the N4 position of cytidine in position 1402 (C1402) of 16S rRNA. The protein is Ribosomal RNA small subunit methyltransferase H of Mycoplasmopsis pulmonis (strain UAB CTIP) (Mycoplasma pulmonis).